A 312-amino-acid chain; its full sequence is Glycerol-3-phosphate phosphatase (312 aa).

Aspartate 30 acts as the Nucleophile in catalysis. Mg(2+) is bound by residues aspartate 30, aspartate 32, and aspartate 251. Residue aspartate 32 is the Proton donor of the active site.

Belongs to the HAD-like hydrolase superfamily. CbbY/CbbZ/Gph/YieH family. In terms of assembly, homodimer. Requires Mg(2+) as cofactor.

The enzyme catalyses O-phospho-L-tyrosyl-[protein] + H2O = L-tyrosyl-[protein] + phosphate. It carries out the reaction sn-glycerol 1-phosphate + H2O = glycerol + phosphate. The catalysed reaction is sn-glycerol 3-phosphate + H2O = glycerol + phosphate. Its function is as follows. Glycerol-3-phosphate phosphatase hydrolyzing glycerol-3-phosphate into glycerol. Thereby, regulates the cellular levels of glycerol-3-phosphate a metabolic intermediate of glucose, lipid and energy metabolism. Was also shown to have a 2-phosphoglycolate phosphatase activity and a tyrosine-protein phosphatase activity. However, their physiological relevance is unclear. In vitro, also has a phosphatase activity toward ADP, ATP, GDP and GTP. The sequence is that of Glycerol-3-phosphate phosphatase from Gallus gallus (Chicken).